Reading from the N-terminus, the 66-residue chain is Large ribosomal subunit protein uL29 (66 aa).

The protein belongs to the universal ribosomal protein uL29 family.

The protein is Large ribosomal subunit protein uL29 of Ruegeria sp. (strain TM1040) (Silicibacter sp.).